The primary structure comprises 31 residues: U1-theraphotoxin-Cv1a (31 aa).

Disulfide bonds link C2/C16, C9/C21, and C15/C28.

As to expression, expressed by the venom gland.

Its subcellular location is the secreted. Its function is as follows. Insecticidal toxin that induces reversible paralysis in crickets but not in cockroaches and mice. Molecular target unknown. The protein is U1-theraphotoxin-Cv1a of Coremiocnemis valida (Singapore tarantula).